The chain runs to 425 residues: UDP-N-acetylglucosamine 1-carboxyvinyltransferase (425 aa).

22–23 (KN) contributes to the phosphoenolpyruvate binding site. Arg-91 lines the UDP-N-acetyl-alpha-D-glucosamine pocket. Cys-115 serves as the catalytic Proton donor. 2-(S-cysteinyl)pyruvic acid O-phosphothioketal is present on Cys-115. Residues 120–124 (RPVDL), Asp-309, and Ile-331 contribute to the UDP-N-acetyl-alpha-D-glucosamine site.

The protein belongs to the EPSP synthase family. MurA subfamily.

The protein resides in the cytoplasm. It catalyses the reaction phosphoenolpyruvate + UDP-N-acetyl-alpha-D-glucosamine = UDP-N-acetyl-3-O-(1-carboxyvinyl)-alpha-D-glucosamine + phosphate. It functions in the pathway cell wall biogenesis; peptidoglycan biosynthesis. Its function is as follows. Cell wall formation. Adds enolpyruvyl to UDP-N-acetylglucosamine. The protein is UDP-N-acetylglucosamine 1-carboxyvinyltransferase of Akkermansia muciniphila (strain ATCC BAA-835 / DSM 22959 / JCM 33894 / BCRC 81048 / CCUG 64013 / CIP 107961 / Muc).